The following is a 178-amino-acid chain: Matrix-remodeling-associated protein 7 (178 aa).

The chain crosses the membrane as a helical span at residues 7-27 (LLAALPALVTALALLLAWLLL). The interval 33–121 (RVPAPESTAS…AFSFKYSPGQ (89 aa)) is disordered. Pro residues predominate over residues 48-65 (APAPPEPPESCAPEPAPE). The segment covering 76–85 (PEESEAEEPA) has biased composition (acidic residues). Phosphoserine occurs at positions 79 and 165.

Its subcellular location is the membrane. This Mus musculus (Mouse) protein is Matrix-remodeling-associated protein 7 (Mxra7).